We begin with the raw amino-acid sequence, 134 residues long: Holo-[acyl-carrier-protein] synthase (134 aa).

Mg(2+)-binding residues include aspartate 8 and glutamate 58.

The protein belongs to the P-Pant transferase superfamily. AcpS family. Mg(2+) is required as a cofactor.

The protein localises to the cytoplasm. It catalyses the reaction apo-[ACP] + CoA = holo-[ACP] + adenosine 3',5'-bisphosphate + H(+). Functionally, transfers the 4'-phosphopantetheine moiety from coenzyme A to a Ser of acyl-carrier-protein. This is Holo-[acyl-carrier-protein] synthase from Acidiphilium cryptum (strain JF-5).